A 195-amino-acid polypeptide reads, in one-letter code: Probable GTP-binding protein EngB (195 aa).

In terms of domain architecture, EngB-type G spans 22-195; the sequence is GYPEIALVGR…WKWIEDRMGE (174 aa). GTP contacts are provided by residues 30 to 37, 57 to 61, 75 to 78, 142 to 145, and 173 to 176; these read GRSNVGKS, GKTQT, DVPG, TKSD, and MFSA. Ser-37 and Thr-59 together coordinate Mg(2+).

The protein belongs to the TRAFAC class TrmE-Era-EngA-EngB-Septin-like GTPase superfamily. EngB GTPase family. It depends on Mg(2+) as a cofactor.

Functionally, necessary for normal cell division and for the maintenance of normal septation. This chain is Probable GTP-binding protein EngB, found in Pediococcus pentosaceus (strain ATCC 25745 / CCUG 21536 / LMG 10740 / 183-1w).